We begin with the raw amino-acid sequence, 191 residues long: 3-hydroxyanthranilate 3,4-dioxygenase 2 (191 aa).

An O2-binding site is contributed by Arg-48. His-52, Glu-73, and His-111 together coordinate Fe cation. Substrate is bound at residue Glu-73. Substrate is bound by residues Arg-115 and Glu-125.

The protein belongs to the 3-HAO family. It depends on Fe(2+) as a cofactor.

It is found in the cytoplasm. The catalysed reaction is 3-hydroxyanthranilate + O2 = (2Z,4Z)-2-amino-3-carboxymuconate 6-semialdehyde. Its pathway is cofactor biosynthesis; NAD(+) biosynthesis; quinolinate from L-kynurenine: step 3/3. Its function is as follows. Catalyzes the oxidative ring opening of 3-hydroxyanthranilate to 2-amino-3-carboxymuconate semialdehyde, which spontaneously cyclizes to quinolinate. In Aspergillus clavatus (strain ATCC 1007 / CBS 513.65 / DSM 816 / NCTC 3887 / NRRL 1 / QM 1276 / 107), this protein is 3-hydroxyanthranilate 3,4-dioxygenase 2 (bna1-2).